The following is a 216-amino-acid chain: DDB1- and CUL4-associated factor 16 (216 aa).

The tract at residues 1–42 (MGPRNPSPDHLSESESEEEENISYLNESSGEEWDSSEEEDSM) is disordered. Positions 29–41 (SGEEWDSSEEEDS) are enriched in acidic residues. Lys-61 carries the N6-acetyllysine modification.

Interacts with DDB1 and CUL4A.

Its subcellular location is the nucleus. The protein operates within protein modification; protein ubiquitination. Its function is as follows. Functions as a substrate recognition component for CUL4-DDB1 E3 ubiquitin-protein ligase complex, which mediates ubiquitination and proteasome-dependent degradation of nuclear proteins. The sequence is that of DDB1- and CUL4-associated factor 16 from Homo sapiens (Human).